Reading from the N-terminus, the 1690-residue chain is MPMSSFKRKIKAIQIKIASPEVIRSWSGGEVKKPETINYRTFKPERDGLFCERIFGPVKDYECACGKYKGKKYEGTVCERCGVRVESREARRKRMGHIELAAPAVHIWYLESIPSVLGTLLNMSTSDLENIIYYGSRRVIERVFIVTDPKDTPFSQGDVIYETEYRIYRKKWDFDVEQAFVVKNPKSPVLSDIDGEVTLKTEKSITGREITWIIVKNITRATHTVLPGMILVVKDGQEVEKGQDLTKEMTIDPVYAPFDGHVEIDELSNTITLKPLTTSKDQPVVFTVPYGAKILVSNGQKVKKGDQITTSTSLPSVKSSISGTVRFGSNLNIRALEDGNFEVLSTGEVYVEQVIEERKYPVFEGALVYVNNGDQVKKGDHLADRFLFEEEYLSATEYKIFESHYPTMFDVEERTENDRPIVVITDIDPEVSKETGLKVGDIVTENEYEAYLQIYPEKIVADAGAQAIKKLLQNLDLEALQAEIEAELKKLPSSSSKAIKLRRRLKMVKDFLKSGNKPEWMVLEVVPVIPPDLRPMIQIEGGRFATTDLNELYRRLINRNNRLKKLLELGAPEIILRNEKRMLQEAVDALIHNGSDSEGKRSRRAVLKDRNGRPLKSLTDLLKGKKGRFRRNLLGKRVDYSGRAVIVVGPNLKIHQCGIPKKMAMELFKPFVLAKLLGEGSSSKTMRKVKKAIIEKEMPEAWEVLEEVIKGSVVLLNRAPTLHRMSIQAFEPKLVEGNAIQLHPVVCPPFNADFDGDQMAVHVPLSAAAQAEARFLMLSRYNIISPAHGKPISLPTQDIIIGSYYLTTVGKEFDSLKEEDVKWKFSSPEEAMLAYHLGFIKLHTPILIKVVINGEEKRIKTTLGRVIFNGILPEDLRDYNRIFDKKQINALVYETFKRHGIDRAADLLDDIKDIGFHYATVSGLTLSLKDLKIPPERDEILRKTWEKVRIIEENYEKGFLTEEQRKSEIIRLWMSVTEEITKLTSKTLAEDPFNPIYMMVNSGARGNIDQVKQLAGIRGLMIKAYDPRSREIKSKIFKGQAIHEALTFDYPVDKNLREGVDILQFFISTYGARKGQVDTAMNTSFAGYLTRRLVDVAQSVTVSEPDCGTHEGIRAMDLIKEGTVVEKMNEFLFGRVLARDVLDPETKEVLKNPETGKEYTRNTMLTDDDANFLASYKKMVDVVRYEEIDITELSLPNMYAEIAEPVGEYEEGTELTWDVVKAAKNEGKYRIKVKVYPVVGTVYAEEEPLYDKKGERQLLVYQEVINEIVAKMLEENGIEKVPVRPDIIVRSPLTCESEYGVCAACYGMDLSNHKIVNVGEAVGIVAAQSIGEPGTQLTMRTFHVGGVMGASDIVSGLTTVEKTFEPYAFLREEKSGGKKEIRKYYGSEAILCEVDGFVKDIATDESGRTVIYIEDYAGNIHAYKVPKRAKVRVEKGQKVLRGETLTSGAIVWWKLLELESEKGVMTAMNLLKIIKNAYVQQGVSIHDKHFEIIFKQMLSMATIVDPGDSDYLPDQLVPLVDIKRFNREILEGNAKVEENRKWVIGKTLAKRIIAETEEGELVELAQKGDEVTEELLKKIIEAGIKEIDVFEKDKVVTYQILPKEPIKYKRRLLSLKKAALNYPGWLSAAAFEETAWVLTAAAIEGKVDPLIGLKENVIVGQLIPAGTGLDVFAGIQVEETPRAAVEEELA.

Zn(2+)-binding residues include Cys63, Cys65, Cys78, and Cys81. Residues Asp753, Asp755, and Asp757 each coordinate Mg(2+). The Zn(2+) site is built by Cys1107, Cys1295, Cys1302, and Cys1305.

Belongs to the RNA polymerase beta' chain family. As to quaternary structure, the RNAP catalytic core consists of 2 alpha, 1 beta, 1 beta' and 1 omega subunit. When a sigma factor is associated with the core the holoenzyme is formed, which can initiate transcription. Requires Mg(2+) as cofactor. Zn(2+) serves as cofactor.

The enzyme catalyses RNA(n) + a ribonucleoside 5'-triphosphate = RNA(n+1) + diphosphate. In terms of biological role, DNA-dependent RNA polymerase catalyzes the transcription of DNA into RNA using the four ribonucleoside triphosphates as substrates. In Thermotoga sp. (strain RQ2), this protein is DNA-directed RNA polymerase subunit beta'.